We begin with the raw amino-acid sequence, 142 residues long: 3-hydroxyacyl-[acyl-carrier-protein] dehydratase FabZ (142 aa).

Residue H47 is part of the active site.

The protein belongs to the thioester dehydratase family. FabZ subfamily.

It is found in the cytoplasm. It carries out the reaction a (3R)-hydroxyacyl-[ACP] = a (2E)-enoyl-[ACP] + H2O. Its function is as follows. Involved in unsaturated fatty acids biosynthesis. Catalyzes the dehydration of short chain beta-hydroxyacyl-ACPs and long chain saturated and unsaturated beta-hydroxyacyl-ACPs. This Coxiella burnetii (strain RSA 331 / Henzerling II) protein is 3-hydroxyacyl-[acyl-carrier-protein] dehydratase FabZ.